A 454-amino-acid chain; its full sequence is tRNA modification GTPase MnmE (454 aa).

3 residues coordinate (6S)-5-formyl-5,6,7,8-tetrahydrofolate: Arg23, Glu80, and Lys120. The TrmE-type G domain maps to 216–377; that stretch reads GMKVVIAGRP…LRNHLKQSMG (162 aa). Residue Asn226 coordinates K(+). GTP is bound by residues 226–231, 245–251, 270–273, 335–338, and 358–360; these read NAGKSS, TDIAGTT, DTAG, NKAD, and SAR. Ser230 contacts Mg(2+). Thr245, Ile247, and Thr250 together coordinate K(+). Thr251 serves as a coordination point for Mg(2+). Lys454 contacts (6S)-5-formyl-5,6,7,8-tetrahydrofolate.

It belongs to the TRAFAC class TrmE-Era-EngA-EngB-Septin-like GTPase superfamily. TrmE GTPase family. Homodimer. Heterotetramer of two MnmE and two MnmG subunits. The cofactor is K(+).

It localises to the cytoplasm. Its function is as follows. Exhibits a very high intrinsic GTPase hydrolysis rate. Involved in the addition of a carboxymethylaminomethyl (cmnm) group at the wobble position (U34) of certain tRNAs, forming tRNA-cmnm(5)s(2)U34. In Escherichia coli O17:K52:H18 (strain UMN026 / ExPEC), this protein is tRNA modification GTPase MnmE.